The following is a 43-amino-acid chain: Thaumatin-like protein 1 (43 aa).

The protein belongs to the thaumatin family.

This is Thaumatin-like protein 1 from Glebionis coronaria (Crown daisy).